Consider the following 182-residue polypeptide: Protein GrpE (182 aa).

Positions 1-35 (MTQENQTPPPEQENLAADPAVETTAETPAVKTPEQ) are disordered.

This sequence belongs to the GrpE family. Homodimer.

The protein localises to the cytoplasm. Participates actively in the response to hyperosmotic and heat shock by preventing the aggregation of stress-denatured proteins, in association with DnaK and GrpE. It is the nucleotide exchange factor for DnaK and may function as a thermosensor. Unfolded proteins bind initially to DnaJ; upon interaction with the DnaJ-bound protein, DnaK hydrolyzes its bound ATP, resulting in the formation of a stable complex. GrpE releases ADP from DnaK; ATP binding to DnaK triggers the release of the substrate protein, thus completing the reaction cycle. Several rounds of ATP-dependent interactions between DnaJ, DnaK and GrpE are required for fully efficient folding. The polypeptide is Protein GrpE (Polynucleobacter necessarius subsp. necessarius (strain STIR1)).